Consider the following 2241-residue polypeptide: MMPGETHPAAPGPADLARCQGCASLQQNLNEYVEALIALKQKIINTDNLLTEYQKKCDELQFARRENSTLHHQVEQMLQKISPLQKCQEELGSLKAELEEKKSSLKLYQDTHQEYARVKEECLRTDAQKKKLEAKVKKLEEAAVKQTQDFKQLRNEKKILEKEFKKTQERLDEFSKQKNEKELRHIGTQISSDSHGSIDKRKVKVLLKELWLCVNTAHRLSGEGGRRIPEKPAKGSSAARASEQDELLPVQGGPARAADMRSFFSKLSMEMEGDFSSSESAEEELPSGASPSTEHAFCEERHSEVSGQRPDDGNRTNVYDHEHFFDDDLQAAIDFFKLPPPLLSPVPSPPPMASGSLPSSLAPESFFGEFTDSSDSDSVPPRDSMESALEDYTAESRAYFDLLEKIKRSDQYVKKPGSLEATQAVNSLTPLGFVTGRTALGEPSAAASLAQGRHWTESSEFVRDRGDSVEEAERMVEAREVDKSVQVGKGLLKHNRKLWLEMASRGPARKKEAGAGESEICFSSLGKRTFSELIESEGKTLSSKALCPSQSEFSKRTLTDGSASKSPCVTGSGRFQRRERDVRESTPQSGICAAAAGRGHSARLPSSSSATSVPVSVCSNHQTPWPGCVSVGTPAEGTCTEQKSPTRTLNTFLLRSEPTACFPKENDPENSLSTLSPKSKLGTSTFSDWKSRGLESFSTLKSTAKGHSLPQSVFPKPTGGGQCKGRGPGATLILPKSDWTSLARSQAGFTRRSSGSADSTSWHRSDVLRRGSGGSPRASSEYQQRTRLQLEKATPASQNSSLTAMHGPSGESTIPPESNAAAALLPNQVSVITKQARPRRVLGSSLEPWQPHGNTLSPAVNGGKETGLMPSVSACVGDGDPIAQVPEQIADKETPSPEVSVSWRNPICDSPSDSLLAENFSCSTDRKLPFSSEDNIFQCAMNEHLQQKPTKSPQTTQSGASRLEAGELLPSGVTSGVFPAEQVPHGPHHQADTEAPVVARESHSAPQNASAPPVVPSRGPLRARVPTVPVCPSSLSRAEEETQGTSQSSLPGASYCYTGIRERGEEDTEVEDEAVSCSEGEHEAEAVMGRRQQEQAEDSHRPLGDPEAGVGEAGHPSDVGDLTSALEECNLSTLLYIDKLSTSEVVMVLESCQLGDYSSRVSASECASKGSLSEEMNTELRQSEISRKKCGKRLWEEKLLRASEEWAESEGDDSCGRTSCQHAQCPLEVPSDVLTKTGEELDTNPVDCGGTDTEHALLESTHHSQAAEDLTEDALPEETSSPMPHTAELPDPSAVDGGGSSPLSSRSDPEHIQSSYEDEPNSGECLSIGEEGLAEPGELLTLSSDSSTPPRLEQSSDCVAETAFRYQISAVTSEVISVLINKDQDLVIEKGDNWTIISGVAISPGMEQVVLCDTLGDAASSQDQGGLDDGSMEKSPEASPSGPLPQEPPCGGDLSGAQEDISSNGQSANFDKSRLRNRPVKPSIWIRSQIYDQTLETEKVASDHTYYNWKLEPLGKNKPRSKISNKDQASKLAKTLVLNRGEVHLNEVPQPASGEGTNIKLPRSQAQPIMAGTDRSTPTNCSPDTLSKIRQEVGPPLPPLLPPLIATPPRSSQTLSPLVPNSGPSSRSSPAGHVSPLCEVPGPPVLSPWPEELQQASPLDPSPSPSTAAASGRIVSSPLQFCAATPKHALPVPGRLPSCAPGHAAVSGPQQENSVKILDTMYPELSARARTLSLLKGNMQLSRGSTVDGKVLPGRVSALLGLKAITSTSTAFVLTGGSSGADGSQGKSQDSGVQQDAGGKRTLAVSMLRSAKRLRLDNKSPEPDTREVTGEGVPEDPQGGSPLAEVVPAEEEQADVPVCSAASLLRVNPREMAESYNIAITRALRKIAESSFDLLPVIRSHVYVGNISKKPVMRDQEKEVVYEFSTTNKHLGEYLLRSILSELKIQKTSLDHSYIHALCRVYVGICRQLGDLERARLFCYSLLKEDFPESEKLTLFIANMWREVFLSQSAISEAMQLVARQRARGEVLNCLRAFLSWEKNAPIDVGIVVSKLLLTIQLCPKTEFQSSEEFGEDLSANIWEYIFAIDLLCCHQRWIWTHDNIISKELWPVMDKWIKYRKGHSNIAYTPDVIVASVLRLIGRLGQLGLKEGFPTAVKNISSVIGMFIQHAQDEDIPWGVQLAAVYALCDLSPSNPAEISKILEAWRTQTSNAIPSAIVHCLEEVGSLSADGSAGCTSKGDSAP.

Positions 22–185 form a coiled coil; that stretch reads CASLQQNLNE…KQKNEKELRH (164 aa). Basic and acidic residues-rich tracts occupy residues 222-233 and 296-315; these read GEGGRRIPEKPA and AFCE…DGNR. Disordered stretches follow at residues 222 to 255, 273 to 315, and 368 to 387; these read GEGG…GGPA, GDFS…DGNR, and GEFT…SMES. Residue Ser-523 is modified to Phosphoserine. A disordered region spans residues 552–590; it reads EFSKRTLTDGSASKSPCVTGSGRFQRRERDVRESTPQSG. The segment covering 559–569 has biased composition (polar residues); it reads TDGSASKSPCV. A Phosphoserine modification is found at Ser-676. Positions 703–817 are disordered; sequence TAKGHSLPQS…PSGESTIPPE (115 aa). Over residues 718-728 the composition is skewed to gly residues; sequence TGGGQCKGRGP. Residues 738-760 are compositionally biased toward polar residues; it reads DWTSLARSQAGFTRRSSGSADST. Thr-803 carries the phosphothreonine modification. Ser-896 carries the phosphoserine modification. The tract at residues 971–1119 is disordered; it reads SGVTSGVFPA…VGEAGHPSDV (149 aa). A compositionally biased stretch (acidic residues) spans 1065–1074; it reads EEDTEVEDEA. Over residues 1091-1104 the composition is skewed to basic and acidic residues; the sequence is RQQEQAEDSHRPLG. Lys-1189 is modified (N6-acetyllysine). 3 disordered regions span residues 1231–1328, 1419–1475, and 1543–1671; these read SDVL…CLSI, ASSQ…KSRL, and VHLN…AAAS. Residues 1252–1266 are compositionally biased toward basic and acidic residues; it reads DTEHALLESTHHSQA. A compositionally biased stretch (polar residues) spans 1460–1470; it reads DISSNGQSANF. 2 positions are modified to phosphoserine: Ser-1553 and Ser-1582. The segment covering 1574 to 1585 has biased composition (polar residues); the sequence is DRSTPTNCSPDT. Residues 1595–1606 are compositionally biased toward pro residues; that stretch reads PPLPPLLPPLIA. Phosphothreonine is present on Thr-1607. Ser-1657, Ser-1662, Ser-1664, Ser-1666, and Ser-1677 each carry phosphoserine. 2 disordered regions span residues 1777–1800 and 1812–1843; these read GSSG…AGGK and KRLR…GSPL. The segment covering 1781–1794 has biased composition (polar residues); it reads ADGSQGKSQDSGVQ. A compositionally biased stretch (basic and acidic residues) spans 1814-1829; that stretch reads LRLDNKSPEPDTREVT. Residue Ser-1820 is modified to Phosphoserine.

This sequence belongs to the ICE1 family. As to quaternary structure, component of the little elongation complex (LEC), at least composed of ELL (ELL, ELL2 or ELL3), ZC3H8, ICE1 and ICE2. Interacts (via N-terminus domain) with ELL. Interacts (via C-terminus domain) with ICE2 and ZC3H8.

It is found in the nucleus. Its subcellular location is the cajal body. Its function is as follows. Component of the little elongation complex (LEC), a complex required to regulate small nuclear RNA (snRNA) gene transcription by RNA polymerase II and III. Specifically acts as a scaffold protein that promotes the LEC complex formation and recruitment and RNA polymerase II occupancy at snRNA genes in subnuclear bodies. This Mus musculus (Mouse) protein is Little elongation complex subunit 1 (Ice1).